Reading from the N-terminus, the 209-residue chain is Kynurenine formamidase (209 aa).

Residue Trp-18 participates in substrate binding. Zn(2+) is bound by residues His-48, His-52, and Asp-54. Residue His-58 is the Proton donor/acceptor of the active site. Zn(2+) is bound by residues His-160 and Glu-172.

Belongs to the Cyclase 1 superfamily. KynB family. In terms of assembly, homodimer. Zn(2+) serves as cofactor.

It carries out the reaction N-formyl-L-kynurenine + H2O = L-kynurenine + formate + H(+). It participates in amino-acid degradation; L-tryptophan degradation via kynurenine pathway; L-kynurenine from L-tryptophan: step 2/2. Its function is as follows. Catalyzes the hydrolysis of N-formyl-L-kynurenine to L-kynurenine, the second step in the kynurenine pathway of tryptophan degradation. This Maricaulis maris (strain MCS10) (Caulobacter maris) protein is Kynurenine formamidase.